Here is a 334-residue protein sequence, read N- to C-terminus: DNA-directed RNA polymerase subunit alpha (334 aa).

The tract at residues 1–234 (MQRSVHELLT…QQLAVFVDFD (234 aa)) is alpha N-terminal domain (alpha-NTD). The tract at residues 248-334 (IDPILLRPVD…LRGDDRVLGG (87 aa)) is alpha C-terminal domain (alpha-CTD).

The protein belongs to the RNA polymerase alpha chain family. Homodimer. The RNAP catalytic core consists of 2 alpha, 1 beta, 1 beta' and 1 omega subunit. When a sigma factor is associated with the core the holoenzyme is formed, which can initiate transcription.

The catalysed reaction is RNA(n) + a ribonucleoside 5'-triphosphate = RNA(n+1) + diphosphate. Functionally, DNA-dependent RNA polymerase catalyzes the transcription of DNA into RNA using the four ribonucleoside triphosphates as substrates. This chain is DNA-directed RNA polymerase subunit alpha, found in Marinobacter nauticus (strain ATCC 700491 / DSM 11845 / VT8) (Marinobacter aquaeolei).